A 126-amino-acid chain; its full sequence is Small ribosomal subunit protein uS13 (126 aa).

Residues 95-126 (NLPVHGQRTHTNARTRKGPRRAIAGKKKAGKK) are disordered.

Belongs to the universal ribosomal protein uS13 family. As to quaternary structure, part of the 30S ribosomal subunit. Forms a loose heterodimer with protein S19. Forms two bridges to the 50S subunit in the 70S ribosome.

Functionally, located at the top of the head of the 30S subunit, it contacts several helices of the 16S rRNA. In the 70S ribosome it contacts the 23S rRNA (bridge B1a) and protein L5 of the 50S subunit (bridge B1b), connecting the 2 subunits; these bridges are implicated in subunit movement. Contacts the tRNAs in the A and P-sites. The polypeptide is Small ribosomal subunit protein uS13 (Frankia casuarinae (strain DSM 45818 / CECT 9043 / HFP020203 / CcI3)).